The following is a 476-amino-acid chain: Glutamate mutase epsilon subunit (476 aa).

Arg-62 is an L-glutamate binding site. Position 64 (Gly-64) interacts with adenosylcob(III)alamin. Arg-96 contributes to the L-glutamate binding site. Residue Asn-119 coordinates adenosylcob(III)alamin. L-glutamate-binding positions include 145–146, Glu-167, and Tyr-173; that span reads RH. Position 176 (Pro-176) interacts with adenosylcob(III)alamin. Tyr-177 serves as a coordination point for L-glutamate. Positions 289, 318, and 322 each coordinate adenosylcob(III)alamin.

The protein belongs to the methylaspartate mutase GlmE subunit family. Heterotetramer composed of 2 epsilon subunits (GlmE) and 2 sigma subunits (GlmS). GlmE exists as a homodimer and GlmS as a monomer. Adenosylcob(III)alamin serves as cofactor.

It carries out the reaction (2S,3S)-3-methyl-L-aspartate = L-glutamate. The protein operates within amino-acid degradation; L-glutamate degradation via mesaconate pathway; acetate and pyruvate from L-glutamate: step 1/4. Catalyzes the carbon skeleton rearrangement of L-glutamate to L-threo-3-methylaspartate ((2S,3S)-3-methylaspartate). This is Glutamate mutase epsilon subunit from Halobacterium salinarum (strain ATCC 700922 / JCM 11081 / NRC-1) (Halobacterium halobium).